The primary structure comprises 317 residues: Vacuolar arginine/histidine antiporter YPQ2 (317 aa).

Residues 1-13 lie on the Vacuolar side of the membrane; it reads MSCSNGIWPTVSN. In terms of domain architecture, PQ-loop 1 spans 8–71; it reads WPTVSNLCGS…AKLTGQLLFQ (64 aa). Residues 14–34 form a helical membrane-spanning segment; sequence LCGSLSFFTSVISLFPQIIET. The Cytoplasmic portion of the chain corresponds to 35–39; the sequence is YRDKS. Residues 40–62 traverse the membrane as a helical segment; sequence VDGLSPYFLLAWLCGDITSLIGA. At 63–71 the chain is on the vacuolar side; sequence KLTGQLLFQ. A helical membrane pass occupies residues 72–94; that stretch reads ILLAIYFLLNDSFVCGQYYYYGV. At 95–143 the chain is on the cytoplasmic side; that stretch reads LHENKLATVGHEPKPLLPELVENGELLREEEDMIQGGSSAESPRSSRRR. Phosphoserine is present on Ser136. The chain crosses the membrane as a helical span at residues 144 to 164; the sequence is SAITAALAIAHTISTASAYPL. Over 165–184 the chain is Vacuolar; that stretch reads NVGSTQSQVGPPGDGKNSQL. Residues 185–205 traverse the membrane as a helical segment; sequence GTILSWIGASFYVGARIPQLI. Residues 185 to 247 enclose the PQ-loop 2 domain; sequence GTILSWIGAS…SCRFLDNQNK (63 aa). Residues 206-215 lie on the Cytoplasmic side of the membrane; that stretch reads KNYNRKSTDG. Residues 216-236 form a helical membrane-spanning segment; that stretch reads LSPFLFATTLLCNITYNLSIF. Over 237–249 the chain is Vacuolar; that stretch reads TSCRFLDNQNKRE. Residues 250–270 form a helical membrane-spanning segment; it reads FIVNELPFIFGSAGTIAFDLI. The Cytoplasmic portion of the chain corresponds to 271 to 317; that stretch reads YFYQYYILYATDMQLRELERELYSPEEDSAAQLVTERTSLLSGETQT.

It belongs to the laat-1 family.

It localises to the vacuole membrane. It catalyses the reaction L-histidine(out) + L-arginine(in) = L-histidine(in) + L-arginine(out). Functionally, amino acid transporter that moves arginine across the vacuolar membrane. Active during nitrogen starvation when it exports stored vacuolar arginine to the cytosol, for use as a nitrogen source. Has been shown to function as an arginine/histidine antiporter when substrate is present on both sides of the membrane, but may also function as a uniporter. The polypeptide is Vacuolar arginine/histidine antiporter YPQ2 (YPQ2) (Saccharomyces cerevisiae (strain ATCC 204508 / S288c) (Baker's yeast)).